The sequence spans 267 residues: 2-oxo-hept-4-ene-1,7-dioate hydratase (267 aa).

Mg(2+) is bound by residues Glu106, Glu108, and Glu139.

This sequence belongs to the hydratase/decarboxylase family. As to quaternary structure, homodecamer. Mg(2+) serves as cofactor.

The enzyme catalyses (4Z)-2-oxohept-4-enedioate + H2O = (4S)-4-hydroxy-2-oxoheptanedioate. It participates in aromatic compound metabolism; 4-hydroxyphenylacetate degradation; pyruvate and succinate semialdehyde from 4-hydroxyphenylacetate: step 6/7. In terms of biological role, transforms 2-oxo-hept-4-ene-1,7-dioate (OHED) into 4-hydroxy-2-oxoheptanedioate, a step in the 4-hydroxyphenylacetic acid (4-HPA) degradation pathway. The sequence is that of 2-oxo-hept-4-ene-1,7-dioate hydratase from Escherichia coli.